We begin with the raw amino-acid sequence, 259 residues long: Ribosomal RNA small subunit methyltransferase J (259 aa).

Residues 101-102, 117-118, 153-154, and aspartate 176 each bind S-adenosyl-L-methionine; these read RD, ER, and SS.

The protein belongs to the methyltransferase superfamily. RsmJ family.

The protein localises to the cytoplasm. The enzyme catalyses guanosine(1516) in 16S rRNA + S-adenosyl-L-methionine = N(2)-methylguanosine(1516) in 16S rRNA + S-adenosyl-L-homocysteine + H(+). Its function is as follows. Specifically methylates the guanosine in position 1516 of 16S rRNA. The chain is Ribosomal RNA small subunit methyltransferase J from Vibrio vulnificus (strain CMCP6).